The sequence spans 219 residues: Large ribosomal subunit protein uL3 (219 aa).

The disordered stretch occupies residues 134–153 (RASHGNSRSHNVPGSIGMAQ). Position 153 is an N5-methylglutamine (Gln-153).

This sequence belongs to the universal ribosomal protein uL3 family. Part of the 50S ribosomal subunit. Forms a cluster with proteins L14 and L19. Methylated by PrmB.

One of the primary rRNA binding proteins, it binds directly near the 3'-end of the 23S rRNA, where it nucleates assembly of the 50S subunit. This is Large ribosomal subunit protein uL3 from Paraburkholderia phytofirmans (strain DSM 17436 / LMG 22146 / PsJN) (Burkholderia phytofirmans).